The sequence spans 414 residues: Gamma-glutamyl phosphate reductase (414 aa).

The protein belongs to the gamma-glutamyl phosphate reductase family.

It localises to the cytoplasm. The enzyme catalyses L-glutamate 5-semialdehyde + phosphate + NADP(+) = L-glutamyl 5-phosphate + NADPH + H(+). It participates in amino-acid biosynthesis; L-proline biosynthesis; L-glutamate 5-semialdehyde from L-glutamate: step 2/2. In terms of biological role, catalyzes the NADPH-dependent reduction of L-glutamate 5-phosphate into L-glutamate 5-semialdehyde and phosphate. The product spontaneously undergoes cyclization to form 1-pyrroline-5-carboxylate. This Xanthomonas oryzae pv. oryzae (strain MAFF 311018) protein is Gamma-glutamyl phosphate reductase.